Here is a 59-residue protein sequence, read N- to C-terminus: Cortexin domain containing 2 (59 aa).

A helical membrane pass occupies residues 20–40 (FAIAFVVLVFVFLIVMVFRCV).

The protein resides in the membrane. This chain is Cortexin domain containing 2, found in Mus musculus (Mouse).